The primary structure comprises 68 residues: Figainin 1 (68 aa).

Residues 1 to 22 (MAFLKKSLFLVLFLGLVSLSIG) form the signal peptide. Residues 23–45 (EEEKREEEEKNEEGANQEENAEN) are disordered. Residues 23 to 47 (EEEKREEEEKNEEGANQEENAENKE) constitute a propeptide that is removed on maturation. Residues 26-42 (KREEEEKNEEGANQEEN) are compositionally biased toward acidic residues. Lys-67 carries the lysine amide modification.

In terms of tissue distribution, expressed by the skin glands.

The protein localises to the secreted. Antimicrobial peptide that displays antibacterial and antiprotozoal activity. Exhibits antibacterial activity against the Gram-positive bacteria S.epidermidis ATCC 12228 (MIC=2 uM), E.casseliflavus ATCC 700327 (MIC=16 uM), S.aureus ATCC 25923 (MIC=4 uM) and E.faecalis ATCC 29212 (MIC=8 uM), and the Gram-negative bacteria E.coli ATCC 25922 (MIC=16 uM) and K.pneumoniae ATCC 13883 (MIC=4 uM). Displays antiprotozoal activity against the epimastigote form of T.cruzi (IC(50)=15.9 uM). Does not show antimicrobial activity against the Gram-negative bacterium P.aeruginosa ATCC 27853, or the fungi C.albicans ATCC 90028 and C.parapsilosis ATCC 22019. Shows high cytolytic activity against human erythrocytes (HC(50)=10 uM), and displays anti-proliferative effects against various cancer cell lines including MCF-7 breast cancer cells (IC(50)=13.7 uM), HeLa cervical adenocarcinoma cells (IC(50)=11.1 uM) and B16F10 murine melanoma cells (IC(50)=10.5 uM). The protein is Figainin 1 of Boana raniceps (Chaco tree frog).